The sequence spans 248 residues: UPF0246 protein A1G_03985 (248 aa).

Belongs to the UPF0246 family.

The protein is UPF0246 protein A1G_03985 of Rickettsia rickettsii (strain Sheila Smith).